Consider the following 438-residue polypeptide: Exosome complex component RRP45B (438 aa).

Disordered stretches follow at residues Pro-293–Glu-322 and Ser-334–Ser-438. Composition is skewed to basic and acidic residues over residues Val-307–Glu-322 and Ser-334–Ala-347. Positions Thr-380–Ala-394 are enriched in polar residues. Basic and acidic residues predominate over residues Leu-410–Lys-429.

The protein belongs to the RNase PH family.

It localises to the cytoplasm. The protein resides in the nucleus. In terms of biological role, probable 3'-&gt;5' exoribonuclease involved in the regulation of cuticular wax biosynthesis by controlling the expression of CER3. May act by degrading a specific mRNA species encoding a negative regulator of CER3 transcription. Can perform exosomal functions and complement the yeast rrp45 null mutant. This chain is Exosome complex component RRP45B, found in Arabidopsis thaliana (Mouse-ear cress).